The chain runs to 363 residues: Serpentine receptor class T-55 (363 aa).

An N-terminal signal peptide occupies residues methionine 1–serine 18. 7 helical membrane passes run isoleucine 70–phenylalanine 90, valine 107–valine 127, isoleucine 143–glycine 163, tryptophan 187–phenylalanine 207, phenylalanine 231–cysteine 251, isoleucine 278–proline 298, and phenylalanine 303–isoleucine 323.

Belongs to the nematode receptor-like protein srt family.

The protein localises to the membrane. This Caenorhabditis elegans protein is Serpentine receptor class T-55 (srt-55).